We begin with the raw amino-acid sequence, 444 residues long: Shufflon protein B' (444 aa).

The constant region stretch occupies residues 1–361 (MKKYDRGWAS…TGAILSCQSG (361 aa)). The segment at 362 to 444 (TWRKVGSGEL…GSITVYAICQ (83 aa)) is variable region.

In Escherichia coli, this protein is Shufflon protein B'.